Here is a 261-residue protein sequence, read N- to C-terminus: Non-homologous end joining protein Ku 1 (261 aa).

Residues Ser-12–Val-171 enclose the Ku domain.

The protein belongs to the prokaryotic Ku family. In terms of assembly, homodimer. Interacts with LigD.

Its function is as follows. With LigD forms a non-homologous end joining (NHEJ) DNA repair enzyme, which repairs dsDNA breaks with reduced fidelity. Binds linear dsDNA with 5'- and 3'- overhangs but not closed circular dsDNA nor ssDNA. Recruits and stimulates the ligase activity of LigD. The protein is Non-homologous end joining protein Ku 1 of Geotalea uraniireducens (strain Rf4) (Geobacter uraniireducens).